The following is a 123-amino-acid chain: Large ribosomal subunit protein bL12 (123 aa).

It belongs to the bacterial ribosomal protein bL12 family. As to quaternary structure, homodimer. Part of the ribosomal stalk of the 50S ribosomal subunit. Forms a multimeric L10(L12)X complex, where L10 forms an elongated spine to which 2 to 4 L12 dimers bind in a sequential fashion. Binds GTP-bound translation factors.

Functionally, forms part of the ribosomal stalk which helps the ribosome interact with GTP-bound translation factors. Is thus essential for accurate translation. This Photorhabdus laumondii subsp. laumondii (strain DSM 15139 / CIP 105565 / TT01) (Photorhabdus luminescens subsp. laumondii) protein is Large ribosomal subunit protein bL12.